A 499-amino-acid chain; its full sequence is FAD-dependent oxidoreductase domain-containing protein 1 (499 aa).

A helical membrane pass occupies residues 75–95; it reads ERADVVIVGGGVMGWSIAYWL.

FAD is required as a cofactor.

It is found in the mitochondrion inner membrane. Required for the assembly of the mitochondrial membrane respiratory chain NADH dehydrogenase (Complex I). Involved in mid-late stages of complex I assembly. The chain is FAD-dependent oxidoreductase domain-containing protein 1 (foxred1) from Xenopus laevis (African clawed frog).